The primary structure comprises 2813 residues: von Willebrand factor (2813 aa).

The signal sequence occupies residues M1 to C22. The VWFD 1 domain occupies A33–E201. 2 disulfides stabilise this stretch: C35/C162 and C57/C200. N-linked (GlcNAc...) asparagine glycans are attached at residues N99, N156, and N211. The TIL 1 domain occupies C295–C348. Positions G386 to Q560 constitute a VWFD 2 domain. Disulfide bonds link C388/C524, C410/C559, and C432/C440. 2 TIL domains span residues C652 to C707 and C776 to C827. A glycan (N-linked (GlcNAc...) asparagine) is linked at N666. Residues S764–E787 are amino-terminal. 3 cysteine pairs are disulfide-bonded: C767–C808, C776–C804, and C810–C821. Residues C788–G833 form an E1 region. Residues R826 to D853 form a CX region. N857 carries N-linked (GlcNAc...) asparagine glycosylation. Positions A865–A1032 constitute a VWFD 3 domain. 8 disulfide bridges follow: C867–C996, C889–C1031, C898–C993, C914–C921, C1060–C1084, C1071–C1111, C1089–C1091, and C1126–C1130. Residues Y1146–C1196 enclose the TIL 4 domain. The N-linked (GlcNAc...) asparagine; atypical glycan is linked to N1147. Disulfide bonds link C1149-C1169, C1153-C1165, and C1196-C1199. N-linked (GlcNAc...) asparagine glycosylation occurs at N1231. C1234 and C1237 are disulfide-bonded. O-linked (GalNAc...) threonine glycans are attached at residues T1248, T1255, and T1256. The O-linked (GalNAc...) serine glycan is linked to S1263. C1272 and C1458 are disulfide-bonded. Positions D1277–I1453 constitute a VWFA 1; binding site for platelet glycoprotein Ib domain. 2 O-linked (GalNAc...) threonine glycosylation sites follow: T1468 and T1477. A glycan (O-linked (GalNAc...) serine) is linked at S1486. T1487 is a glycosylation site (O-linked (GalNAc...) threonine). The 168-residue stretch at D1498 to V1665 folds into the VWFA 2 domain. An N-linked (GlcNAc...) (complex) asparagine glycan is attached at N1515. An N-linked (GlcNAc...) asparagine glycan is attached at N1574. C1669 and C1670 form a disulfide bridge. The O-linked (GalNAc...) threonine glycan is linked to T1679. 7 disulfides stabilise this stretch: C1686-C1872, C1879-C1904, C1899-C1940, C1927-C2088, C1950-C2085, C1972-C2123, and C1993-C2001. A VWFA 3; main binding site for collagens type I and III domain is found at D1691–L1871. A VWFD 4 domain is found at C1948–Q2124. The interval C2216–D2261 is E2. N-linked (GlcNAc...) asparagine glycosylation is found at N2223 and N2290. The region spanning T2255–D2328 is the VWFC 1 domain. T2298 carries O-linked (GalNAc...) threonine glycosylation. N-linked (GlcNAc...) asparagine glycans are attached at residues N2357 and N2400. The VWFC 2 domain occupies K2429–L2495. The short motif at R2507 to D2509 is the Cell attachment site element. N2546 and N2585 each carry an N-linked (GlcNAc...) asparagine glycan. A VWFC 3 domain is found at E2580–L2645. 4 cysteine pairs are disulfide-bonded: C2724–C2774, C2739–C2788, C2750–C2804, and C2754–C2806. The CTCK domain occupies C2724–S2812. Residue N2790 is glycosylated (N-linked (GlcNAc...) asparagine).

In terms of assembly, multimeric. Interacts with F8. All cysteine residues are involved in intrachain or interchain disulfide bonds. In terms of processing, N- and O-glycosylated. In terms of tissue distribution, plasma.

The protein localises to the secreted. Its subcellular location is the extracellular space. It localises to the extracellular matrix. In terms of biological role, important in the maintenance of hemostasis, it promotes adhesion of platelets to the sites of vascular injury by forming a molecular bridge between sub-endothelial collagen matrix and platelet-surface receptor complex GPIb-IX-V. Also acts as a chaperone for coagulation factor VIII, delivering it to the site of injury, stabilizing its heterodimeric structure and protecting it from premature clearance from plasma. This is von Willebrand factor (VWF) from Homo sapiens (Human).